Here is a 534-residue protein sequence, read N- to C-terminus: uncharacterized protein (534 aa).

Helical transmembrane passes span 4 to 22, 24 to 46, 56 to 75, 82 to 104, and 134 to 156; these read ILVL…RVSF, GISL…GWTI, ALFV…RGLA, AITG…RLLG, and PAAV…VLFV. The segment at 167–187 is disordered; that stretch reads GDSDGTDSASETSGQSSAEIA. Positions 172-187 are enriched in polar residues; that stretch reads TDSASETSGQSSAEIA. RCK C-terminal domains lie at 180–264 and 265–349; these read GQSS…TLGE and LQDT…AVGH. 6 helical membrane-spanning segments follow: residues 359–378, 382–401, 408–430, 445–467, 479–501, and 511–533; these read LLSL…LSLQ, FSMS…ILGH, IRGS…LFLA, MERG…LVGF, WQSL…LTGA, and YVAA…VELI.

Belongs to the AAE transporter (TC 2.A.81) family.

It is found in the cell membrane. This is an uncharacterized protein from Rhodopirellula baltica (strain DSM 10527 / NCIMB 13988 / SH1).